The following is a 497-amino-acid chain: UPF0371 protein DIP2346 (497 aa).

Belongs to the UPF0371 family.

The chain is UPF0371 protein DIP2346 from Corynebacterium diphtheriae (strain ATCC 700971 / NCTC 13129 / Biotype gravis).